Reading from the N-terminus, the 613-residue chain is V-type proton ATPase catalytic subunit A isoform 1 (613 aa).

240-247 provides a ligand contact to ATP; sequence GAFGCGKT.

This sequence belongs to the ATPase alpha/beta chains family. As to quaternary structure, V-ATPase is a heteromultimeric enzyme composed of a peripheral catalytic V1 complex (main components: subunits A, B, C, D, E, and F) attached to an integral membrane V0 proton pore complex (main component: the proteolipid protein).

It catalyses the reaction ATP + H2O + 4 H(+)(in) = ADP + phosphate + 5 H(+)(out). In terms of biological role, catalytic subunit of the peripheral V1 complex of vacuolar ATPase. V-ATPase vacuolar ATPase is responsible for acidifying a variety of intracellular compartments in eukaryotic cells. In Acetabularia acetabulum (Mermaid's wine glass), this protein is V-type proton ATPase catalytic subunit A isoform 1.